A 270-amino-acid polypeptide reads, in one-letter code: Formamidopyrimidine-DNA glycosylase (270 aa).

P2 acts as the Schiff-base intermediate with DNA in catalysis. The active-site Proton donor is E3. K58 functions as the Proton donor; for beta-elimination activity in the catalytic mechanism. 3 residues coordinate DNA: H91, R109, and R151. An FPG-type zinc finger spans residues 236–270; that stretch reads QVYGKTGQQCPSCETPLKAVKLAARASVYCPECQS. R260 (proton donor; for delta-elimination activity) is an active-site residue.

Belongs to the FPG family. In terms of assembly, monomer. Zn(2+) is required as a cofactor.

The enzyme catalyses Hydrolysis of DNA containing ring-opened 7-methylguanine residues, releasing 2,6-diamino-4-hydroxy-5-(N-methyl)formamidopyrimidine.. The catalysed reaction is 2'-deoxyribonucleotide-(2'-deoxyribose 5'-phosphate)-2'-deoxyribonucleotide-DNA = a 3'-end 2'-deoxyribonucleotide-(2,3-dehydro-2,3-deoxyribose 5'-phosphate)-DNA + a 5'-end 5'-phospho-2'-deoxyribonucleoside-DNA + H(+). Involved in base excision repair of DNA damaged by oxidation or by mutagenic agents. Acts as a DNA glycosylase that recognizes and removes damaged bases. Has a preference for oxidized purines, such as 7,8-dihydro-8-oxoguanine (8-oxoG). Has AP (apurinic/apyrimidinic) lyase activity and introduces nicks in the DNA strand. Cleaves the DNA backbone by beta-delta elimination to generate a single-strand break at the site of the removed base with both 3'- and 5'-phosphates. The protein is Formamidopyrimidine-DNA glycosylase of Psychromonas ingrahamii (strain DSM 17664 / CCUG 51855 / 37).